We begin with the raw amino-acid sequence, 29 residues long: Cyclotide vibi-A (29 aa).

A cross-link (cyclopeptide (Gly-Asn)) is located at residues 1-29 (GLPVCGETCFGGTCNTPGCSCSYPICTRN). 3 disulfides stabilise this stretch: Cys-5–Cys-19, Cys-9–Cys-21, and Cys-14–Cys-26.

Post-translationally, this is a cyclic peptide.

Probably participates in a plant defense mechanism. The polypeptide is Cyclotide vibi-A (Viola biflora (Yellow wood violet)).